The sequence spans 849 residues: Glycogen phosphorylase (849 aa).

Lys679 carries the post-translational modification N6-(pyridoxal phosphate)lysine.

The protein belongs to the glycogen phosphorylase family. Pyridoxal 5'-phosphate serves as cofactor.

It carries out the reaction [(1-&gt;4)-alpha-D-glucosyl](n) + phosphate = [(1-&gt;4)-alpha-D-glucosyl](n-1) + alpha-D-glucose 1-phosphate. Its function is as follows. Phosphorylase is an important allosteric enzyme in carbohydrate metabolism. Enzymes from different sources differ in their regulatory mechanisms and in their natural substrates. However, all known phosphorylases share catalytic and structural properties. This Synechocystis sp. (strain ATCC 27184 / PCC 6803 / Kazusa) protein is Glycogen phosphorylase (glgP).